Consider the following 56-residue polypeptide: Small ribosomal subunit protein uS14 (56 aa).

This sequence belongs to the universal ribosomal protein uS14 family.

This chain is Small ribosomal subunit protein uS14 (RPS29), found in Kluyveromyces lactis (strain ATCC 8585 / CBS 2359 / DSM 70799 / NBRC 1267 / NRRL Y-1140 / WM37) (Yeast).